The chain runs to 313 residues: MSVIDTNQIDLVAPRISEAGVADYIALLKPRVMSLVVFTALVGMLLAPGDFHPVLAITAMLCIAVGGGAAGALNMWYEDDIDGQMTRTANRPIPRGRVTRPEALTFGITLSFFSVMTLGILVNWVAGALLAFTIFFYVVIYTMWLKRSTAQNIVIGGAAGALPPVVAWAAVTGSLAVEPLLLFAIIFFWTPPHFWALALFRNDDYARAGVPMLPVVAGQDHTRLQILLYTIVLVAVAAAPWPLGYFSAIYGVASLALGGWMLVLALRVYRHRTGSAALRATRNLFKFSILYLFALFSILLLEVVAKAVWRLFA.

Helical transmembrane passes span Val32–His52, Pro53–Leu73, Ile120–Ile140, Ile153–Gly173, Leu180–Phe200, Ile226–Phe246, Ala248–Val268, and Leu284–Val304.

The protein belongs to the UbiA prenyltransferase family. Protoheme IX farnesyltransferase subfamily.

The protein localises to the cell inner membrane. The catalysed reaction is heme b + (2E,6E)-farnesyl diphosphate + H2O = Fe(II)-heme o + diphosphate. It functions in the pathway porphyrin-containing compound metabolism; heme O biosynthesis; heme O from protoheme: step 1/1. Functionally, converts heme B (protoheme IX) to heme O by substitution of the vinyl group on carbon 2 of heme B porphyrin ring with a hydroxyethyl farnesyl side group. This Rhodopseudomonas palustris (strain HaA2) protein is Protoheme IX farnesyltransferase.